A 450-amino-acid polypeptide reads, in one-letter code: Methylenetetrahydrofolate--tRNA-(uracil-5-)-methyltransferase TrmFO (450 aa).

FAD is bound at residue Gly-10–Gly-15.

It belongs to the MnmG family. TrmFO subfamily. The cofactor is FAD.

The protein resides in the cytoplasm. It carries out the reaction uridine(54) in tRNA + (6R)-5,10-methylene-5,6,7,8-tetrahydrofolate + NADH + H(+) = 5-methyluridine(54) in tRNA + (6S)-5,6,7,8-tetrahydrofolate + NAD(+). The enzyme catalyses uridine(54) in tRNA + (6R)-5,10-methylene-5,6,7,8-tetrahydrofolate + NADPH + H(+) = 5-methyluridine(54) in tRNA + (6S)-5,6,7,8-tetrahydrofolate + NADP(+). Catalyzes the folate-dependent formation of 5-methyl-uridine at position 54 (M-5-U54) in all tRNAs. The sequence is that of Methylenetetrahydrofolate--tRNA-(uracil-5-)-methyltransferase TrmFO from Anaeromyxobacter dehalogenans (strain 2CP-C).